Reading from the N-terminus, the 252-residue chain is tRNA (guanine-N(1)-)-methyltransferase (252 aa).

S-adenosyl-L-methionine-binding positions include G118 and 138-143 (IGDYVL).

Belongs to the RNA methyltransferase TrmD family. Homodimer.

It is found in the cytoplasm. The catalysed reaction is guanosine(37) in tRNA + S-adenosyl-L-methionine = N(1)-methylguanosine(37) in tRNA + S-adenosyl-L-homocysteine + H(+). Its function is as follows. Specifically methylates guanosine-37 in various tRNAs. In Pseudomonas paraeruginosa (strain DSM 24068 / PA7) (Pseudomonas aeruginosa (strain PA7)), this protein is tRNA (guanine-N(1)-)-methyltransferase.